Reading from the N-terminus, the 257-residue chain is Uracil phosphoribosyltransferase homolog (257 aa).

GTP-binding positions include Arg-81, Arg-90, and 124 to 127 (EKGN). 5-phospho-alpha-D-ribose 1-diphosphate is bound at residue Arg-134. Positions 151 and 180 each coordinate GTP. Residue 186-194 (YPILSTGNT) participates in 5-phospho-alpha-D-ribose 1-diphosphate binding. Uracil is bound at residue 247–249 (THF).

The protein belongs to the UPRTase family.

It is found in the cytoplasm. The protein localises to the nucleus. The sequence is that of Uracil phosphoribosyltransferase homolog (uprt) from Danio rerio (Zebrafish).